The primary structure comprises 318 residues: tRNA U34 carboxymethyltransferase (318 aa).

K88, W102, K107, G126, M192, Y196, and R311 together coordinate carboxy-S-adenosyl-L-methionine.

Belongs to the class I-like SAM-binding methyltransferase superfamily. CmoB family. Homotetramer.

It carries out the reaction carboxy-S-adenosyl-L-methionine + 5-hydroxyuridine(34) in tRNA = 5-carboxymethoxyuridine(34) in tRNA + S-adenosyl-L-homocysteine + H(+). Its function is as follows. Catalyzes carboxymethyl transfer from carboxy-S-adenosyl-L-methionine (Cx-SAM) to 5-hydroxyuridine (ho5U) to form 5-carboxymethoxyuridine (cmo5U) at position 34 in tRNAs. In Pseudomonas fluorescens (strain Pf0-1), this protein is tRNA U34 carboxymethyltransferase.